An 87-amino-acid chain; its full sequence is Down syndrome critical region protein 10 (87 aa).

This is Down syndrome critical region protein 10 (DSCR10) from Pan troglodytes (Chimpanzee).